Here is a 424-residue protein sequence, read N- to C-terminus: Testican-2 (424 aa).

Residues 1 to 22 (MRAPGCGRLVLPLLLLAAAALA) form the signal peptide. At Ser72 the chain carries Phosphoserine; by FAM20C. 5 disulfides stabilise this stretch: Cys90-Cys101, Cys95-Cys111, Cys136-Cys166, Cys139-Cys159, and Cys148-Cys180. The Kazal-like domain occupies 130–182 (GNKDSICKPCHMAQLASVCGSDGHTYSSVCKLEQQACLSSKQLAVRCEGPCPC). N-linked (GlcNAc...) asparagine glycosylation occurs at Asn225. A Thyroglobulin type-1 domain is found at 310 to 376 (KPPCLAELER…GTRTHGSPDC (67 aa)). Intrachain disulfides connect Cys313–Cys337, Cys348–Cys355, and Cys357–Cys376. Ser383 and Ser388 each carry an O-linked (Xyl...) (glycosaminoglycan) serine glycan. The disordered stretch occupies residues 387 to 424 (GSGVGWEDEEEKETEEAGEEAEEEEGEAGEADDGGYIW). Residues 392 to 424 (WEDEEEKETEEAGEEAEEEEGEAGEADDGGYIW) are compositionally biased toward acidic residues.

In terms of processing, contains chondroitin sulfate and heparan sulfate O-linked oligosaccharides. As to expression, highly expressed in brain. Also found in lung and testis.

It localises to the secreted. The protein localises to the extracellular space. It is found in the extracellular matrix. May participate in diverse steps of neurogenesis. Binds calcium. The protein is Testican-2 (SPOCK2) of Homo sapiens (Human).